The primary structure comprises 85 residues: Protein U62 (85 aa).

The protein belongs to the herpesviridae UL91 family.

This chain is Protein U62 (U62), found in Homo sapiens (Human).